Reading from the N-terminus, the 440-residue chain is Frizzled/smoothened-like sans CRD protein D (440 aa).

The N-terminal stretch at methionine 1–glycine 27 is a signal peptide. The Extracellular segment spans residues glutamine 28–leucine 85. 3 N-linked (GlcNAc...) asparagine glycosylation sites follow: asparagine 43, asparagine 62, and asparagine 82. The chain crosses the membrane as a helical span at residues isoleucine 86–valine 106. The Cytoplasmic segment spans residues asparagine 107–asparagine 110. A helical transmembrane segment spans residues glycine 111–threonine 131. Over threonine 132 to cysteine 162 the chain is Extracellular. Residues leucine 163–isoleucine 183 traverse the membrane as a helical segment. Residues serine 184 to glutamine 200 are Cytoplasmic-facing. Residues phenylalanine 201–alanine 221 traverse the membrane as a helical segment. Over serine 222 to glycine 244 the chain is Extracellular. A helical membrane pass occupies residues tyrosine 245 to isoleucine 265. At arginine 266–lysine 285 the chain is on the cytoplasmic side. The chain crosses the membrane as a helical span at residues proline 286–tyrosine 306. The Extracellular segment spans residues threonine 307–histidine 346. An N-linked (GlcNAc...) asparagine glycan is attached at asparagine 328. Residues phenylalanine 347–threonine 367 form a helical membrane-spanning segment. The Cytoplasmic segment spans residues arginine 368–asparagine 440. The segment at isoleucine 395–glutamate 428 is disordered.

Belongs to the G-protein coupled receptor Fz/Smo family.

The protein resides in the membrane. This chain is Frizzled/smoothened-like sans CRD protein D (fscD), found in Dictyostelium discoideum (Social amoeba).